We begin with the raw amino-acid sequence, 340 residues long: Nicotianamine synthase 9 (340 aa).

Belongs to the nicotianamine synthase (NAS)-like family. As to quaternary structure, homotrimer.

The enzyme catalyses 3 S-adenosyl-L-methionine = nicotianamine + 3 S-methyl-5'-thioadenosine + 3 H(+). In terms of biological role, synthesizes nicotianamine, a polyamine that is the first intermediate in the synthesis of the phytosiderophores of the mugineic acid type found in gramineae which serves as a sensor for the physiological iron status within the plant, and/or might be involved in the transport of iron. The sequence is that of Nicotianamine synthase 9 (NAS9) from Hordeum vulgare (Barley).